An 89-amino-acid polypeptide reads, in one-letter code: Putative RING finger protein 121R (89 aa).

Residues 45 to 78 form an RING-type zinc finger; the sequence is CPICLIAKVNTVLECTHVLCSNCVKKINVCPICR.

This is Putative RING finger protein 121R from Invertebrate iridescent virus 6 (IIV-6).